Consider the following 224-residue polypeptide: Cytidylate kinase (224 aa).

11–19 (GPAAAGKST) serves as a coordination point for ATP.

Belongs to the cytidylate kinase family. Type 1 subfamily.

It localises to the cytoplasm. The enzyme catalyses CMP + ATP = CDP + ADP. The catalysed reaction is dCMP + ATP = dCDP + ADP. The protein is Cytidylate kinase (cmk) of Bacillus subtilis (strain 168).